The primary structure comprises 512 residues: Glutamyl-tRNA(Gln) amidotransferase subunit A (512 aa).

Active-site charge relay system residues include Lys82 and Ser157. Ser181 functions as the Acyl-ester intermediate in the catalytic mechanism.

It belongs to the amidase family. GatA subfamily. As to quaternary structure, heterotrimer of A, B and C subunits.

It carries out the reaction L-glutamyl-tRNA(Gln) + L-glutamine + ATP + H2O = L-glutaminyl-tRNA(Gln) + L-glutamate + ADP + phosphate + H(+). Its function is as follows. Allows the formation of correctly charged Gln-tRNA(Gln) through the transamidation of misacylated Glu-tRNA(Gln) in organisms which lack glutaminyl-tRNA synthetase. The reaction takes place in the presence of glutamine and ATP through an activated gamma-phospho-Glu-tRNA(Gln). This Bordetella petrii (strain ATCC BAA-461 / DSM 12804 / CCUG 43448) protein is Glutamyl-tRNA(Gln) amidotransferase subunit A.